Consider the following 439-residue polypeptide: Diaminopimelate decarboxylase (439 aa).

At Lys66 the chain carries N6-(pyridoxal phosphate)lysine. Residues Gly248 and 290-293 contribute to the pyridoxal 5'-phosphate site; that span reads EPGR. Substrate contacts are provided by Arg293, Arg330, and Tyr334. Residue Cys361 is the Proton donor of the active site. The substrate site is built by Glu362 and Tyr390. Tyr390 contacts pyridoxal 5'-phosphate.

It belongs to the Orn/Lys/Arg decarboxylase class-II family. LysA subfamily. As to quaternary structure, homodimer. It depends on pyridoxal 5'-phosphate as a cofactor.

The enzyme catalyses meso-2,6-diaminopimelate + H(+) = L-lysine + CO2. It functions in the pathway amino-acid biosynthesis; L-lysine biosynthesis via DAP pathway; L-lysine from DL-2,6-diaminopimelate: step 1/1. Specifically catalyzes the decarboxylation of meso-diaminopimelate (meso-DAP) to L-lysine. This is Diaminopimelate decarboxylase from Bacillus subtilis (strain 168).